Here is a 1043-residue protein sequence, read N- to C-terminus: Isoleucine--tRNA ligase (1043 aa).

The 'HIGH' region motif lies at 49–59 (PFATGLPHYGH). Positions 592-596 (KMSKR) match the 'KMSKS' region motif. Position 595 (Lys595) interacts with ATP.

It belongs to the class-I aminoacyl-tRNA synthetase family. IleS type 2 subfamily. In terms of assembly, monomer. Zn(2+) serves as cofactor.

The protein resides in the cytoplasm. The catalysed reaction is tRNA(Ile) + L-isoleucine + ATP = L-isoleucyl-tRNA(Ile) + AMP + diphosphate. In terms of biological role, catalyzes the attachment of isoleucine to tRNA(Ile). As IleRS can inadvertently accommodate and process structurally similar amino acids such as valine, to avoid such errors it has two additional distinct tRNA(Ile)-dependent editing activities. One activity is designated as 'pretransfer' editing and involves the hydrolysis of activated Val-AMP. The other activity is designated 'posttransfer' editing and involves deacylation of mischarged Val-tRNA(Ile). This chain is Isoleucine--tRNA ligase, found in Chlamydia caviae (strain ATCC VR-813 / DSM 19441 / 03DC25 / GPIC) (Chlamydophila caviae).